A 614-amino-acid chain; its full sequence is Probable LRR receptor-like serine/threonine-protein kinase At5g63710 (614 aa).

The first 50 residues, 1-50 (MAHSGNGESFHDPLRGFIQRNCFRWNNQKLILQCFMALAFVGITSSTTQP), serve as a signal peptide directing secretion. The Extracellular segment spans residues 51-224 (DIEGGALLQL…VTSSKKKLRD (174 aa)). Residues asparagine 65, asparagine 125, asparagine 146, and asparagine 175 are each glycosylated (N-linked (GlcNAc...) asparagine). 3 LRR repeats span residues 115–139 (LKFLVTLELQNNSLSGALPDSLGNM), 141–163 (NLQTLNLSVNSFSGSIPASWSQL), and 164–187 (SNLKHLDLSSNNLTGSIPTQFFSI). Residues 225–245 (ITLTASCVASIILFLGAMVMY) traverse the membrane as a helical segment. Residues 246–613 (HHHRVRRTKY…DQESIRLSTA (368 aa)) lie on the Cytoplasmic side of the membrane. Residue threonine 286 is modified to Phosphothreonine. The Protein kinase domain maps to 289–573 (FNESNLIGQG…GTGGLAEKWT (285 aa)). 295–303 (IGQGGFGKV) is a binding site for ATP. Threonine 312 carries the phosphothreonine modification. Lysine 317 lines the ATP pocket. Serine 370 bears the Phosphoserine mark. Threonine 389 carries the phosphothreonine modification. Aspartate 416 functions as the Proton acceptor in the catalytic mechanism. A phosphothreonine mark is found at threonine 449, threonine 450, and threonine 455. Position 463 is a phosphotyrosine (tyrosine 463). Threonine 466 bears the Phosphothreonine mark. Serine 470 is modified (phosphoserine). Threonine 545 carries the phosphothreonine modification.

Belongs to the protein kinase superfamily. Ser/Thr protein kinase family.

It localises to the cell membrane. The catalysed reaction is L-seryl-[protein] + ATP = O-phospho-L-seryl-[protein] + ADP + H(+). It catalyses the reaction L-threonyl-[protein] + ATP = O-phospho-L-threonyl-[protein] + ADP + H(+). The polypeptide is Probable LRR receptor-like serine/threonine-protein kinase At5g63710 (Arabidopsis thaliana (Mouse-ear cress)).